A 258-amino-acid polypeptide reads, in one-letter code: Adenylate kinase (258 aa).

52–57 (GAGKGT) is a binding site for ATP. Residues 72 to 101 (ATGDMLRSQVAKKTELGKEAKKIMDQGGLV) are NMP. AMP-binding positions include Thr73, Arg78, 99–101 (GLV), 128–131 (GFPR), and Gln135. The LID stretch occupies residues 169-206 (GRLVHPASGRSYHKVFNPPKQEMKDDITGEPLIQRSDD). Residues Arg170 and 179-180 (SY) contribute to the ATP site. Arg203 and Arg214 together coordinate AMP. Residue Gln242 coordinates ATP.

It belongs to the adenylate kinase family. AK2 subfamily. In terms of assembly, monomer.

The protein localises to the cytoplasm. The protein resides in the cytosol. Its subcellular location is the mitochondrion intermembrane space. It carries out the reaction AMP + ATP = 2 ADP. Functionally, catalyzes the reversible transfer of the terminal phosphate group between ATP and AMP. Plays an important role in cellular energy homeostasis and in adenine nucleotide metabolism. Adenylate kinase activity is critical for regulation of the phosphate utilization and the AMP de novo biosynthesis pathways. This Aspergillus oryzae (strain ATCC 42149 / RIB 40) (Yellow koji mold) protein is Adenylate kinase (adk1).